The sequence spans 302 residues: Probable alpha-L-glutamate ligase (302 aa).

One can recognise an ATP-grasp domain in the interval 112–294; the sequence is LQLLLKAGIP…IAAEIIDYIE (183 aa). Residues lysine 148, 185–186, aspartate 194, and 218–220 each bind ATP; these read DF and RAN. Residues aspartate 255, glutamate 267, and asparagine 269 each coordinate Mg(2+). Mn(2+) contacts are provided by aspartate 255, glutamate 267, and asparagine 269.

Belongs to the RimK family. It depends on Mg(2+) as a cofactor. Mn(2+) serves as cofactor.

This chain is Probable alpha-L-glutamate ligase, found in Haemophilus influenzae (strain ATCC 51907 / DSM 11121 / KW20 / Rd).